The following is a 333-amino-acid chain: 5-formaminoimidazole-4-carboxamide-1-(beta)-D-ribofuranosyl 5'-monophosphate synthetase (333 aa).

Residues histidine 20 and serine 85 each coordinate 5-amino-1-(5-phospho-beta-D-ribosyl)imidazole-4-carboxamide. Positions 106 to 313 (RELIKWEADQ…YFDRPMDMGE (208 aa)) constitute an ATP-grasp domain. ATP-binding positions include 136–187 (PEEV…VPAY) and glutamate 209. Asparagine 229 contributes to the 5-amino-1-(5-phospho-beta-D-ribosyl)imidazole-4-carboxamide binding site. Glutamate 268 and glutamate 281 together coordinate Mg(2+).

The protein belongs to the phosphohexose mutase family. The cofactor is Mg(2+). Requires Mn(2+) as cofactor.

It carries out the reaction 5-amino-1-(5-phospho-beta-D-ribosyl)imidazole-4-carboxamide + formate + ATP = 5-formamido-1-(5-phospho-D-ribosyl)imidazole-4-carboxamide + ADP + phosphate. The protein operates within purine metabolism; IMP biosynthesis via de novo pathway; 5-formamido-1-(5-phospho-D-ribosyl)imidazole-4-carboxamide from 5-amino-1-(5-phospho-D-ribosyl)imidazole-4-carboxamide (formate route): step 1/1. In terms of biological role, catalyzes the ATP- and formate-dependent formylation of 5-aminoimidazole-4-carboxamide-1-beta-d-ribofuranosyl 5'-monophosphate (AICAR) to 5-formaminoimidazole-4-carboxamide-1-beta-d-ribofuranosyl 5'-monophosphate (FAICAR) in the absence of folates. The sequence is that of 5-formaminoimidazole-4-carboxamide-1-(beta)-D-ribofuranosyl 5'-monophosphate synthetase from Pyrobaculum islandicum (strain DSM 4184 / JCM 9189 / GEO3).